Reading from the N-terminus, the 69-residue chain is Peptide Hact-1 (69 aa).

Residues 1–21 form the signal peptide; sequence MDRKFHLCLLLVILGTIIVQG. The propeptide occupies 22 to 57; it reads APLENENDADPDKPQKYRYYLKRATTEKKDNDPAKP. The cysteines at positions 59 and 68 are disulfide-linked.

As to expression, tentacle (ecto and/or endoderm tissue), and possibly also nematoblasts.

It is found in the secreted. The protein resides in the nematocyst. Functionally, peptide with unknown function. Has a limited effect on human peripheral blood mononuclear cells. Does not show activity against both Gram-positive and Gram-negative bacteria nor is it active on the 26 voltage-gated ion channels tested. The protein is Peptide Hact-1 of Heliofungia actiniformis (Mushroom coral).